The primary structure comprises 311 residues: Ketoisovalerate oxidoreductase subunit VorB (311 aa).

In terms of assembly, heterotetramer of one alpha, one beta, one delta and one gamma chain.

The catalysed reaction is 3-methyl-2-oxobutanoate + 2 oxidized [2Fe-2S]-[ferredoxin] + CoA = 2-methylpropanoyl-CoA + 2 reduced [2Fe-2S]-[ferredoxin] + CO2 + H(+). This Pyrococcus furiosus (strain ATCC 43587 / DSM 3638 / JCM 8422 / Vc1) protein is Ketoisovalerate oxidoreductase subunit VorB (vorB).